Consider the following 312-residue polypeptide: Ribosomal protein L11 methyltransferase (312 aa).

Residues Thr162, Gly183, Asp205, and Asn248 each coordinate S-adenosyl-L-methionine.

Belongs to the methyltransferase superfamily. PrmA family.

The protein localises to the cytoplasm. It catalyses the reaction L-lysyl-[protein] + 3 S-adenosyl-L-methionine = N(6),N(6),N(6)-trimethyl-L-lysyl-[protein] + 3 S-adenosyl-L-homocysteine + 3 H(+). Its function is as follows. Methylates ribosomal protein L11. In Anoxybacillus flavithermus (strain DSM 21510 / WK1), this protein is Ribosomal protein L11 methyltransferase.